Consider the following 261-residue polypeptide: Shikimate dehydrogenase (NADP(+)) (261 aa).

Shikimate is bound by residues serine 13–serine 15 and threonine 60. The Proton acceptor role is filled by lysine 64. Positions 85 and 100 each coordinate shikimate. NADP(+) is bound by residues glycine 121–alanine 125 and isoleucine 202. Tyrosine 204 provides a ligand contact to shikimate. Glycine 225 serves as a coordination point for NADP(+).

Belongs to the shikimate dehydrogenase family. In terms of assembly, homodimer.

The enzyme catalyses shikimate + NADP(+) = 3-dehydroshikimate + NADPH + H(+). It functions in the pathway metabolic intermediate biosynthesis; chorismate biosynthesis; chorismate from D-erythrose 4-phosphate and phosphoenolpyruvate: step 4/7. Its function is as follows. Involved in the biosynthesis of the chorismate, which leads to the biosynthesis of aromatic amino acids. Catalyzes the reversible NADPH linked reduction of 3-dehydroshikimate (DHSA) to yield shikimate (SA). The sequence is that of Shikimate dehydrogenase (NADP(+)) from Exiguobacterium sibiricum (strain DSM 17290 / CCUG 55495 / CIP 109462 / JCM 13490 / 255-15).